The primary structure comprises 419 residues: Serine hydroxymethyltransferase (419 aa).

Residues Leu121 and Gly125–Leu127 each bind (6S)-5,6,7,8-tetrahydrofolate. Residue Lys229 is modified to N6-(pyridoxal phosphate)lysine.

This sequence belongs to the SHMT family. In terms of assembly, homodimer. The cofactor is pyridoxal 5'-phosphate.

The protein resides in the cytoplasm. The catalysed reaction is (6R)-5,10-methylene-5,6,7,8-tetrahydrofolate + glycine + H2O = (6S)-5,6,7,8-tetrahydrofolate + L-serine. Its pathway is one-carbon metabolism; tetrahydrofolate interconversion. It functions in the pathway amino-acid biosynthesis; glycine biosynthesis; glycine from L-serine: step 1/1. Catalyzes the reversible interconversion of serine and glycine with tetrahydrofolate (THF) serving as the one-carbon carrier. This reaction serves as the major source of one-carbon groups required for the biosynthesis of purines, thymidylate, methionine, and other important biomolecules. Also exhibits THF-independent aldolase activity toward beta-hydroxyamino acids, producing glycine and aldehydes, via a retro-aldol mechanism. The sequence is that of Serine hydroxymethyltransferase from Histophilus somni (strain 2336) (Haemophilus somnus).